Here is a 441-residue protein sequence, read N- to C-terminus: tRNA(Ile)-lysidine synthase (441 aa).

Ser27 to Ser32 provides a ligand contact to ATP.

Belongs to the tRNA(Ile)-lysidine synthase family.

Its subcellular location is the cytoplasm. It catalyses the reaction cytidine(34) in tRNA(Ile2) + L-lysine + ATP = lysidine(34) in tRNA(Ile2) + AMP + diphosphate + H(+). Functionally, ligates lysine onto the cytidine present at position 34 of the AUA codon-specific tRNA(Ile) that contains the anticodon CAU, in an ATP-dependent manner. Cytidine is converted to lysidine, thus changing the amino acid specificity of the tRNA from methionine to isoleucine. This Proteus mirabilis (strain HI4320) protein is tRNA(Ile)-lysidine synthase.